Consider the following 352-residue polypeptide: Forkhead box protein D5 (352 aa).

2 disordered regions span residues 1-32 (MSLS…LGED) and 47-92 (HSEM…GKAK). Residues 20-32 (SDEEDEIDILGED) show a composition bias toward acidic residues. The segment covering 73 to 82 (ESEGGTSKDS) has biased composition (low complexity). Positions 97–191 (KPPYSYIALI…DNGSFLRRRK (95 aa)) form a DNA-binding region, fork-head.

Expression begins in the newly forming dorsal mesoderm and is maintained during gastrulation at the dorsal blastopore lip (Spemann organizer). At the early neurula stages, expressed in a row of cells along the dorsal midline that are destined to become the fllor plate of the neural tube. At late neurula, expressed within the anterior and posterior poles of the embryo. After neural closure, expression is detected only in the tailtip, the otic vesicle and at the midbrain/hindbrain boundary.

Its subcellular location is the nucleus. Functionally, transcriptional repressor. The protein is Forkhead box protein D5 of Xenopus tropicalis (Western clawed frog).